A 267-amino-acid chain; its full sequence is Indole-3-glycerol phosphate synthase 1 (267 aa).

Belongs to the TrpC family.

It catalyses the reaction 1-(2-carboxyphenylamino)-1-deoxy-D-ribulose 5-phosphate + H(+) = (1S,2R)-1-C-(indol-3-yl)glycerol 3-phosphate + CO2 + H2O. It functions in the pathway amino-acid biosynthesis; L-tryptophan biosynthesis; L-tryptophan from chorismate: step 4/5. This is Indole-3-glycerol phosphate synthase 1 (trpC1) from Ralstonia nicotianae (strain ATCC BAA-1114 / GMI1000) (Ralstonia solanacearum).